We begin with the raw amino-acid sequence, 314 residues long: Hydrolase 4 (314 aa).

Residues 73 to 75 (HGA) carry the Involved in the stabilization of the negatively charged intermediate by the formation of the oxyanion hole motif. Residues Ser165 and Asp260 contribute to the active site.

It belongs to the 'GDXG' lipolytic enzyme family.

Its pathway is alkaloid biosynthesis. Its function is as follows. Component of the seco-iridoid and derivatives monoterpenoid indole alkaloids (MIAs, e.g. vincadifformine) biosynthesis pathway. Catalyzes the conversion of O-acetylstemmadenine (OAS) to vincadifformine. May also trigger the formation of additional unknown MIAs. This is Hydrolase 4 from Catharanthus roseus (Madagascar periwinkle).